The following is a 525-amino-acid chain: GMP synthase [glutamine-hydrolyzing] (525 aa).

In terms of domain architecture, Glutamine amidotransferase type-1 spans 9–202; that stretch reads SILIIDFGSQ…VHKIVGLKSD (194 aa). The active-site Nucleophile is Cys-86. Active-site residues include His-176 and Glu-178. Positions 203 to 400 constitute a GMPS ATP-PPase domain; the sequence is WTMAAYRAEM…LGLPESFIGR (198 aa). Position 230–236 (230–236) interacts with ATP; the sequence is SGGVDSS.

As to quaternary structure, homodimer.

It catalyses the reaction XMP + L-glutamine + ATP + H2O = GMP + L-glutamate + AMP + diphosphate + 2 H(+). Its pathway is purine metabolism; GMP biosynthesis; GMP from XMP (L-Gln route): step 1/1. Catalyzes the synthesis of GMP from XMP. This Agrobacterium fabrum (strain C58 / ATCC 33970) (Agrobacterium tumefaciens (strain C58)) protein is GMP synthase [glutamine-hydrolyzing].